The sequence spans 435 residues: 5'-deoxyadenosine deaminase (435 aa).

2 residues coordinate Zn(2+): H64 and H66. 2 residues coordinate substrate: E93 and H185. H212 contacts Zn(2+). The substrate site is built by E215 and D300. Zn(2+) is bound at residue D300.

The protein belongs to the metallo-dependent hydrolases superfamily. MTA/SAH deaminase family. Homotetramer. It depends on Zn(2+) as a cofactor.

The enzyme catalyses 5'-deoxyadenosine + H2O + H(+) = 5'-deoxyinosine + NH4(+). The catalysed reaction is S-adenosyl-L-homocysteine + H2O + H(+) = S-inosyl-L-homocysteine + NH4(+). It carries out the reaction S-methyl-5'-thioadenosine + H2O + H(+) = S-methyl-5'-thioinosine + NH4(+). It catalyses the reaction adenosine + H2O + H(+) = inosine + NH4(+). The protein operates within amino-acid biosynthesis; S-adenosyl-L-methionine biosynthesis. Its function is as follows. Catalyzes the deamination of three SAM-derived enzymatic products, namely 5'-deoxyadenosine, S-adenosyl-L-homocysteine, and 5'-methylthioadenosine, to produce the inosine analogs. Can also deaminate adenosine. The preferred substrate for this enzyme is 5'-deoxyadenosine, but all these substrates are efficiently deaminated. Likely functions in a S-adenosyl-L-methionine (SAM) recycling pathway from S-adenosyl-L-homocysteine (SAH) produced from SAM-dependent methylation reactions. May also be involved in the recycling of 5'-deoxyadenosine, whereupon the 5'-deoxyribose moiety of 5'-deoxyinosine is further metabolized to deoxyhexoses used for the biosynthesis of aromatic amino acids in methanogens. The sequence is that of 5'-deoxyadenosine deaminase from Methanobrevibacter smithii (strain ATCC 35061 / DSM 861 / OCM 144 / PS).